Here is a 327-residue protein sequence, read N- to C-terminus: Aspartate--ammonia ligase (327 aa).

Belongs to the class-II aminoacyl-tRNA synthetase family. AsnA subfamily.

The protein resides in the cytoplasm. It catalyses the reaction L-aspartate + NH4(+) + ATP = L-asparagine + AMP + diphosphate + H(+). It participates in amino-acid biosynthesis; L-asparagine biosynthesis; L-asparagine from L-aspartate (ammonia route): step 1/1. This is Aspartate--ammonia ligase from Bacillus cereus (strain AH820).